The sequence spans 610 residues: UvrABC system protein C (610 aa).

One can recognise a GIY-YIG domain in the interval 16-94 (SQPGVYRMYD…IKLYQPRYNV (79 aa)). Positions 204–239 (DQVLTQLISRMETASQNLEFEEAARIRDQIQAVRRV) constitute a UVR domain.

It belongs to the UvrC family. As to quaternary structure, interacts with UvrB in an incision complex.

The protein localises to the cytoplasm. Functionally, the UvrABC repair system catalyzes the recognition and processing of DNA lesions. UvrC both incises the 5' and 3' sides of the lesion. The N-terminal half is responsible for the 3' incision and the C-terminal half is responsible for the 5' incision. The polypeptide is UvrABC system protein C (Shigella boydii serotype 18 (strain CDC 3083-94 / BS512)).